The following is a 532-amino-acid chain: Probable rhamnogalacturonase B (532 aa).

The signal sequence occupies residues 1-21 (MRINTLSLFSLVSLVPTLALA). Cys-42 and Cys-68 are disulfide-bonded. Catalysis depends on Asp-219, which acts as the Proton donor. Cysteines 221 and 238 form a disulfide. N-linked (GlcNAc...) asparagine glycosylation occurs at Asn-239. Residue His-294 is part of the active site. An N-linked (GlcNAc...) asparagine glycan is attached at Asn-321. Cystine bridges form between Cys-344/Cys-350 and Cys-374/Cys-383. Low complexity-rich tracts occupy residues 466–475 (TVAAATSTPA) and 490–499 (QPSQQSPGQS). Residues 466 to 532 (TVAAATSTPA…HRHHQRHGHH (67 aa)) form a disordered region. Residues 521–532 (AGHRHHQRHGHH) are compositionally biased toward basic residues.

It belongs to the glycosyl hydrolase 28 family.

It localises to the secreted. It carries out the reaction Endohydrolysis of alpha-D-GalA-(1-&gt;2)-alpha-L-Rha glycosidic bond in the rhamnogalacturonan I backbone with initial inversion of anomeric configuration releasing oligosaccharides with beta-D-GalA at the reducing end.. Its function is as follows. Pectinolytic enzymes consist of four classes of enzymes: pectine lyase, polygalacturonase, pectin methylesterase and rhamnogalacturonase. Hydrolyzes alpha-D-galacturonopyranosyl-(1,2)-alpha-L-rhamnopyranosyl linkages in the backbone of the hairy regions of pectins. The chain is Probable rhamnogalacturonase B (rhgB) from Aspergillus oryzae (strain ATCC 42149 / RIB 40) (Yellow koji mold).